An 81-amino-acid polypeptide reads, in one-letter code: MGMPSGQELLIILAIVVLLFGAKKIPELAKGIGKGIKNFKAEMKNEDDDTEVKSASTEAPKKVESAEEVASKESSKTPTQA.

Residues 1 to 21 (MGMPSGQELLIILAIVVLLFG) form a helical membrane-spanning segment. The interval 45-81 (NEDDDTEVKSASTEAPKKVESAEEVASKESSKTPTQA) is disordered. The segment covering 59-75 (APKKVESAEEVASKESS) has biased composition (basic and acidic residues).

Belongs to the TatA/E family. The Tat system comprises two distinct complexes: a TatABC complex, containing multiple copies of TatA, TatB and TatC subunits, and a separate TatA complex, containing only TatA subunits. Substrates initially bind to the TatABC complex, which probably triggers association of the separate TatA complex to form the active translocon.

It is found in the cell inner membrane. In terms of biological role, part of the twin-arginine translocation (Tat) system that transports large folded proteins containing a characteristic twin-arginine motif in their signal peptide across membranes. TatA could form the protein-conducting channel of the Tat system. This Sulfurimonas denitrificans (strain ATCC 33889 / DSM 1251) (Thiomicrospira denitrificans (strain ATCC 33889 / DSM 1251)) protein is Sec-independent protein translocase protein TatA.